Here is a 342-residue protein sequence, read N- to C-terminus: Flagellar P-ring protein (342 aa).

A signal peptide spans 1 to 19; sequence MKRVFLWLIFVLAFHKLLA.

Belongs to the FlgI family. The basal body constitutes a major portion of the flagellar organelle and consists of four rings (L,P,S, and M) mounted on a central rod.

It is found in the periplasm. Its subcellular location is the bacterial flagellum basal body. In terms of biological role, assembles around the rod to form the L-ring and probably protects the motor/basal body from shearing forces during rotation. The chain is Flagellar P-ring protein from Helicobacter pylori (strain G27).